Here is a 259-residue protein sequence, read N- to C-terminus: Ribosomal RNA small subunit methyltransferase A (259 aa).

Residues Asn-13, Thr-15, Gly-40, Glu-61, Asp-85, and Asn-105 each coordinate S-adenosyl-L-methionine.

The protein belongs to the class I-like SAM-binding methyltransferase superfamily. rRNA adenine N(6)-methyltransferase family. RsmA subfamily.

It localises to the cytoplasm. It carries out the reaction adenosine(1518)/adenosine(1519) in 16S rRNA + 4 S-adenosyl-L-methionine = N(6)-dimethyladenosine(1518)/N(6)-dimethyladenosine(1519) in 16S rRNA + 4 S-adenosyl-L-homocysteine + 4 H(+). Functionally, specifically dimethylates two adjacent adenosines (A1518 and A1519) in the loop of a conserved hairpin near the 3'-end of 16S rRNA in the 30S particle. May play a critical role in biogenesis of 30S subunits. This Mycoplasma genitalium (strain ATCC 33530 / DSM 19775 / NCTC 10195 / G37) (Mycoplasmoides genitalium) protein is Ribosomal RNA small subunit methyltransferase A.